A 132-amino-acid chain; its full sequence is Small ribosomal subunit protein uS8 (132 aa).

Belongs to the universal ribosomal protein uS8 family. Part of the 30S ribosomal subunit. Contacts proteins S5 and S12.

Its function is as follows. One of the primary rRNA binding proteins, it binds directly to 16S rRNA central domain where it helps coordinate assembly of the platform of the 30S subunit. The protein is Small ribosomal subunit protein uS8 of Mycolicibacterium vanbaalenii (strain DSM 7251 / JCM 13017 / BCRC 16820 / KCTC 9966 / NRRL B-24157 / PYR-1) (Mycobacterium vanbaalenii).